Here is a 451-residue protein sequence, read N- to C-terminus: UDP-N-acetylmuramoylalanine--D-glutamate ligase (451 aa).

An ATP-binding site is contributed by 118–124 (GTKGKST).

It belongs to the MurCDEF family.

Its subcellular location is the cytoplasm. The enzyme catalyses UDP-N-acetyl-alpha-D-muramoyl-L-alanine + D-glutamate + ATP = UDP-N-acetyl-alpha-D-muramoyl-L-alanyl-D-glutamate + ADP + phosphate + H(+). The protein operates within cell wall biogenesis; peptidoglycan biosynthesis. Cell wall formation. Catalyzes the addition of glutamate to the nucleotide precursor UDP-N-acetylmuramoyl-L-alanine (UMA). This is UDP-N-acetylmuramoylalanine--D-glutamate ligase from Borreliella afzelii (strain PKo) (Borrelia afzelii).